Here is a 277-residue protein sequence, read N- to C-terminus: Large ribosomal subunit protein uL2 (277 aa).

The segment at G222–K277 is disordered.

Belongs to the universal ribosomal protein uL2 family. As to quaternary structure, part of the 50S ribosomal subunit. Forms a bridge to the 30S subunit in the 70S ribosome.

In terms of biological role, one of the primary rRNA binding proteins. Required for association of the 30S and 50S subunits to form the 70S ribosome, for tRNA binding and peptide bond formation. It has been suggested to have peptidyltransferase activity; this is somewhat controversial. Makes several contacts with the 16S rRNA in the 70S ribosome. This chain is Large ribosomal subunit protein uL2, found in Streptococcus agalactiae serotype Ia (strain ATCC 27591 / A909 / CDC SS700).